The primary structure comprises 467 residues: 3-isopropylmalate dehydratase large subunit (467 aa).

Cys-347, Cys-407, and Cys-410 together coordinate [4Fe-4S] cluster.

Belongs to the aconitase/IPM isomerase family. LeuC type 1 subfamily. Heterodimer of LeuC and LeuD. [4Fe-4S] cluster serves as cofactor.

It carries out the reaction (2R,3S)-3-isopropylmalate = (2S)-2-isopropylmalate. It participates in amino-acid biosynthesis; L-leucine biosynthesis; L-leucine from 3-methyl-2-oxobutanoate: step 2/4. Catalyzes the isomerization between 2-isopropylmalate and 3-isopropylmalate, via the formation of 2-isopropylmaleate. This is 3-isopropylmalate dehydratase large subunit from Synechococcus sp. (strain JA-2-3B'a(2-13)) (Cyanobacteria bacterium Yellowstone B-Prime).